The chain runs to 427 residues: Glucose-1-phosphate adenylyltransferase (427 aa).

Residues Tyr-112, Gly-177, 192–193, and Ser-210 contribute to the alpha-D-glucose 1-phosphate site; that span reads EK.

Belongs to the bacterial/plant glucose-1-phosphate adenylyltransferase family. In terms of assembly, homotetramer.

The catalysed reaction is alpha-D-glucose 1-phosphate + ATP + H(+) = ADP-alpha-D-glucose + diphosphate. It participates in glycan biosynthesis; glycogen biosynthesis. Functionally, involved in the biosynthesis of ADP-glucose, a building block required for the elongation reactions to produce glycogen. Catalyzes the reaction between ATP and alpha-D-glucose 1-phosphate (G1P) to produce pyrophosphate and ADP-Glc. The protein is Glucose-1-phosphate adenylyltransferase of Methylobacillus flagellatus (strain ATCC 51484 / DSM 6875 / VKM B-1610 / KT).